Reading from the N-terminus, the 30-residue chain is Brevinin-2Rj (30 aa).

A disulfide bridge links C24 with C30.

As to expression, expressed by the skin glands.

The protein resides in the secreted. Antimicrobial peptide. In Pelophylax ridibundus (Marsh frog), this protein is Brevinin-2Rj.